A 638-amino-acid chain; its full sequence is Bifunctional protein glk (638 aa).

Residues 1–20 (MSTGVQTKAAPGAGQHADGP) form a disordered region. Residues 1–341 (MSTGVQTKAA…QLSNRAGGSS (341 aa)) form a glucokinase region. 24–29 (ADIGGT) is a binding site for ATP. Residues 342–418 (SAVFERIRQM…LKLATGLTGT (77 aa)) enclose the HTH rpiR-type domain. The segment at 342 to 638 (SAVFERIRQM…SHGAASSARD (297 aa)) is putative HTH-type transcriptional regulator. Positions 378–397 (IVDIARKADVSQPTVIRFCR) form a DNA-binding region, H-T-H motif. In terms of domain architecture, SIS spans 462–601 (AIDLLNGARR…AVGVAIRRAV (140 aa)).

The protein in the N-terminal section; belongs to the bacterial glucokinase family.

Its subcellular location is the cytoplasm. It catalyses the reaction D-glucose + ATP = D-glucose 6-phosphate + ADP + H(+). The polypeptide is Bifunctional protein glk (glk) (Paraburkholderia xenovorans (strain LB400)).